The chain runs to 142 residues: Hemoglobin subunit beta-1 (142 aa).

The Globin domain maps to Ser2–His142. Positions 59 and 88 each coordinate heme b.

This sequence belongs to the globin family. As to quaternary structure, heterotetramer of two alpha chains and two beta chains. Red blood cells.

Involved in oxygen transport from the lung to the various peripheral tissues. This chain is Hemoglobin subunit beta-1 (HBB1), found in Torpedo marmorata (Marbled electric ray).